The chain runs to 71 residues: Small ribosomal subunit protein bS21 (71 aa).

Over residues 48 to 59 (KAAAAVKRHAKK) the composition is skewed to basic residues. Positions 48 to 71 (KAAAAVKRHAKKVQREQRRRERLY) are disordered. Positions 60–71 (VQREQRRRERLY) are enriched in basic and acidic residues.

The protein belongs to the bacterial ribosomal protein bS21 family.

The polypeptide is Small ribosomal subunit protein bS21 (Azotobacter vinelandii (strain DJ / ATCC BAA-1303)).